We begin with the raw amino-acid sequence, 611 residues long: Dehydrogenase pkfF (611 aa).

A signal peptide spans 1-19 (MRHTALLPLVSSFIVPALA). Residues asparagine 28 and asparagine 38 are each glycosylated (N-linked (GlcNAc...) asparagine). FAD is bound by residues 50-51 (TS), 71-72 (EA), and 137-140 (HYMV). N-linked (GlcNAc...) asparagine glycosylation is found at asparagine 180, asparagine 187, asparagine 240, asparagine 272, asparagine 409, and asparagine 471. The active-site Proton acceptor is the histidine 547. Residues alanine 581 and 592–593 (PQ) contribute to the FAD site.

Belongs to the GMC oxidoreductase family. The cofactor is FAD.

It participates in secondary metabolite biosynthesis. Dehydrogenase; part of the gene cluster that mediates the biosynthesis of aspernidine A, a prenylated isoindolinone. The starting point of the biosynthesis of aspernidin A is the production of orsellinaldehyde by the non-reducing polyketide synthase pkfA. Hydroxylation, methylation of one of the phenol groups, and prenylation, presumably catalyzed by the prenyltransferase pkfE, would be needed to yield aspernidine D. Subsequently, the cytochrome P450 monooxygenase pkfB is responsible for hydroxylation of aspernidine D to yield aspernidine E. The dehydrogenase pkfF may be responsible for further oxidation of aspernidine E to form a dialdehyde intermediate which is further transformed in a series of steps, some of which are enzyme-mediated, to generate aspernidine A. The possibility that additional enzymes outside of the cluster are involved in aspernidine A biosynthesis cannot be excluded. This Emericella nidulans (strain FGSC A4 / ATCC 38163 / CBS 112.46 / NRRL 194 / M139) (Aspergillus nidulans) protein is Dehydrogenase pkfF.